Here is a 97-residue protein sequence, read N- to C-terminus: Secreted RxLR effector protein BLR05 (97 aa).

The signal sequence occupies residues 1–21 (MGPQHLLALVVVSILVAAGNA). Residues 32-60 (RALRPSVIADQEHAVHAIPATNFISKDED) carry the RxLR-dEER motif. Residues 69–89 (IEIIRIAIFSLLVVGVFAIMA) traverse the membrane as a helical segment.

Belongs to the RxLR effector family. In terms of assembly, interacts with host transcription factor NAC069.

The protein resides in the secreted. It is found in the host endoplasmic reticulum membrane. Functionally, secreted effector that inhibits stress-induced relocalization of the transcription factor NAC069 to the nucleus, thus affecting its broad role in abiotic and biotic stress responses. In Bremia lactucae (Lettuce downy mildew), this protein is Secreted RxLR effector protein BLR05.